The following is a 189-amino-acid chain: Peptidyl-tRNA hydrolase (189 aa).

Tyr15 lines the tRNA pocket. The active-site Proton acceptor is His20. Phe66, Asn68, and Asn114 together coordinate tRNA.

This sequence belongs to the PTH family. Monomer.

It is found in the cytoplasm. It catalyses the reaction an N-acyl-L-alpha-aminoacyl-tRNA + H2O = an N-acyl-L-amino acid + a tRNA + H(+). Hydrolyzes ribosome-free peptidyl-tRNAs (with 1 or more amino acids incorporated), which drop off the ribosome during protein synthesis, or as a result of ribosome stalling. Functionally, catalyzes the release of premature peptidyl moieties from peptidyl-tRNA molecules trapped in stalled 50S ribosomal subunits, and thus maintains levels of free tRNAs and 50S ribosomes. This is Peptidyl-tRNA hydrolase from Streptococcus pneumoniae (strain P1031).